A 122-amino-acid polypeptide reads, in one-letter code: Aspartate 1-decarboxylase (122 aa).

The active-site Schiff-base intermediate with substrate; via pyruvic acid is serine 25. A Pyruvic acid (Ser) modification is found at serine 25. Position 57 (threonine 57) interacts with substrate. Catalysis depends on tyrosine 58, which acts as the Proton donor. 73-75 (GAA) contacts substrate.

It belongs to the PanD family. In terms of assembly, heterooctamer of four alpha and four beta subunits. Requires pyruvate as cofactor. Post-translationally, is synthesized initially as an inactive proenzyme, which is activated by self-cleavage at a specific serine bond to produce a beta-subunit with a hydroxyl group at its C-terminus and an alpha-subunit with a pyruvoyl group at its N-terminus.

The protein resides in the cytoplasm. It catalyses the reaction L-aspartate + H(+) = beta-alanine + CO2. The protein operates within cofactor biosynthesis; (R)-pantothenate biosynthesis; beta-alanine from L-aspartate: step 1/1. Catalyzes the pyruvoyl-dependent decarboxylation of aspartate to produce beta-alanine. The polypeptide is Aspartate 1-decarboxylase (Bordetella avium (strain 197N)).